Here is a 506-residue protein sequence, read N- to C-terminus: Cysteine--tRNA ligase (506 aa).

C34 is a Zn(2+) binding site. The short motif at 36–46 is the 'HIGH' region element; sequence PTVYDFAHIGN. 3 residues coordinate Zn(2+): C230, H269, and E273. The short motif at 302–306 is the 'KMSKS' region element; it reads KMSKS. An ATP-binding site is contributed by K305.

It belongs to the class-I aminoacyl-tRNA synthetase family. Monomer. It depends on Zn(2+) as a cofactor.

It is found in the cytoplasm. The catalysed reaction is tRNA(Cys) + L-cysteine + ATP = L-cysteinyl-tRNA(Cys) + AMP + diphosphate. The protein is Cysteine--tRNA ligase of Brucella ovis (strain ATCC 25840 / 63/290 / NCTC 10512).